The sequence spans 106 residues: NADH-quinone oxidoreductase subunit K (106 aa).

3 helical membrane-spanning segments follow: residues 10 to 30, 34 to 54, and 67 to 87; these read VTYI…GVLI, IVII…VFVT, and IVFF…ALVI.

It belongs to the complex I subunit 4L family. As to quaternary structure, NDH-1 is composed of 14 different subunits. Subunits NuoA, H, J, K, L, M, N constitute the membrane sector of the complex.

It localises to the cell inner membrane. It catalyses the reaction a quinone + NADH + 5 H(+)(in) = a quinol + NAD(+) + 4 H(+)(out). NDH-1 shuttles electrons from NADH, via FMN and iron-sulfur (Fe-S) centers, to quinones in the respiratory chain. The immediate electron acceptor for the enzyme in this species is believed to be ubiquinone. Couples the redox reaction to proton translocation (for every two electrons transferred, four hydrogen ions are translocated across the cytoplasmic membrane), and thus conserves the redox energy in a proton gradient. This is NADH-quinone oxidoreductase subunit K from Leptospira biflexa serovar Patoc (strain Patoc 1 / Ames).